Here is a 276-residue protein sequence, read N- to C-terminus: Diaminopimelate epimerase (276 aa).

3 residues coordinate substrate: asparagine 13, glutamine 46, and asparagine 66. Cysteine 75 acts as the Proton donor in catalysis. Substrate-binding positions include 76–77, asparagine 159, asparagine 192, and 210–211; these read GN and ER. Cysteine 219 acts as the Proton acceptor in catalysis. Position 220–221 (220–221) interacts with substrate; it reads GT.

This sequence belongs to the diaminopimelate epimerase family. In terms of assembly, homodimer.

Its subcellular location is the cytoplasm. It carries out the reaction (2S,6S)-2,6-diaminopimelate = meso-2,6-diaminopimelate. The protein operates within amino-acid biosynthesis; L-lysine biosynthesis via DAP pathway; DL-2,6-diaminopimelate from LL-2,6-diaminopimelate: step 1/1. Catalyzes the stereoinversion of LL-2,6-diaminopimelate (L,L-DAP) to meso-diaminopimelate (meso-DAP), a precursor of L-lysine and an essential component of the bacterial peptidoglycan. This is Diaminopimelate epimerase from Pseudomonas syringae pv. syringae (strain B728a).